Reading from the N-terminus, the 169-residue chain is Co-chaperone protein HscB homolog (169 aa).

The region spanning 2–74 (NYFDLFSLPV…CLRAQYLLLL (73 aa)) is the J domain.

This sequence belongs to the HscB family. As to quaternary structure, interacts with HscA and stimulates its ATPase activity.

Co-chaperone involved in the maturation of iron-sulfur cluster-containing proteins. Seems to help targeting proteins to be folded toward HscA. The sequence is that of Co-chaperone protein HscB homolog from Psychromonas ingrahamii (strain DSM 17664 / CCUG 51855 / 37).